We begin with the raw amino-acid sequence, 74 residues long: MNATIFALLLLLNLAMYNAAEQSSETDMDDTLLIPEINRGRCIEEGKWCPKKAPCCGRLECKGPSPKQKKCTRP.

Residues M1 to A19 form the signal peptide. The propeptide occupies A20–R39. Intrachain disulfides connect C42–C56, C49–C61, and C55–C71.

It belongs to the neurotoxin 36 family. 01 subfamily. In terms of tissue distribution, expressed by the venom gland.

It localises to the secreted. In terms of biological role, probable ion channel inhibitor. The polypeptide is U4-theraphotoxin-Cg1a (Chilobrachys guangxiensis (Chinese earth tiger tarantula)).